A 363-amino-acid polypeptide reads, in one-letter code: tRNA/tmRNA (uracil-C(5))-methyltransferase (363 aa).

The S-adenosyl-L-methionine site is built by Gln187, Tyr215, Asn220, Glu236, and Asp296. Residue Cys321 is the Nucleophile of the active site. Glu355 acts as the Proton acceptor in catalysis.

The protein belongs to the class I-like SAM-binding methyltransferase superfamily. RNA M5U methyltransferase family. TrmA subfamily.

It catalyses the reaction uridine(54) in tRNA + S-adenosyl-L-methionine = 5-methyluridine(54) in tRNA + S-adenosyl-L-homocysteine + H(+). The catalysed reaction is uridine(341) in tmRNA + S-adenosyl-L-methionine = 5-methyluridine(341) in tmRNA + S-adenosyl-L-homocysteine + H(+). Functionally, dual-specificity methyltransferase that catalyzes the formation of 5-methyluridine at position 54 (m5U54) in all tRNAs, and that of position 341 (m5U341) in tmRNA (transfer-mRNA). The chain is tRNA/tmRNA (uracil-C(5))-methyltransferase from Haemophilus influenzae (strain 86-028NP).